The following is a 526-amino-acid chain: Variant surface glycoprotein MITAT 1.4A (526 aa).

The signal sequence occupies residues Met-1–Gly-33. 2 disulfides stabilise this stretch: Cys-47–Cys-173 and Cys-154–Cys-215. Residues Asn-157–Ala-193 are disordered. An N-linked (GlcNAc...) asparagine glycan is attached at Asn-453. Asp-503 carries GPI-anchor amidated aspartate lipidation. Positions Ser-504–Phe-526 are cleaved as a propeptide — removed in mature form.

It is found in the cell membrane. In terms of biological role, VSG forms a coat on the surface of the parasite. The trypanosome evades the immune response of the host by expressing a series of antigenically distinct VSGs from an estimated 1000 VSG genes. This chain is Variant surface glycoprotein MITAT 1.4A, found in Trypanosoma brucei brucei.